A 346-amino-acid chain; its full sequence is Growth hormone-inducible transmembrane protein (346 aa).

Residues methionine 1–glutamate 45 constitute a mitochondrion transit peptide. Residues tyrosine 46–arginine 83 lie on the Mitochondrial matrix side of the membrane. Residues tryptophan 84–methionine 104 form a helical membrane-spanning segment. At serine 105–histidine 126 the chain is on the mitochondrial intermembrane side. Residues serine 127 to alanine 147 form a helical membrane-spanning segment. At arginine 148–serine 160 the chain is on the mitochondrial matrix side. A helical transmembrane segment spans residues tryptophan 161 to isoleucine 181. The Mitochondrial intermembrane segment spans residues serine 182 to histidine 191. The chain crosses the membrane as a helical span at residues leucine 192–glycine 212. The Mitochondrial matrix portion of the chain corresponds to glycine 213–proline 214. A helical membrane pass occupies residues leucine 215 to methionine 235. Over cysteine 236–methionine 245 the chain is Mitochondrial intermembrane. The helical transmembrane segment at glycine 246 to leucine 266 threads the bilayer. At proline 267–alanine 272 the chain is on the mitochondrial matrix side. Residues glycine 273–leucine 293 traverse the membrane as a helical segment. Residues tyrosine 294–lysine 346 lie on the Mitochondrial intermembrane side of the membrane.

The protein belongs to the BI1 family. Interacts with LETM1 and AFG3L2. Post-translationally, undergoes AFG3L2-mediated proteolytic degradation, upon hyperpolarization of mitochondria.

It is found in the mitochondrion inner membrane. It carries out the reaction Ca(2+)(in) + 2 H(+)(out) = Ca(2+)(out) + 2 H(+)(in). The catalysed reaction is K(+)(in) + H(+)(out) = K(+)(out) + H(+)(in). Its function is as follows. Plays an important role in maintenance of mitochondrial morphology and in mediating either calcium or potassium/proton antiport. Mediates proton-dependent calcium efflux from mitochondrion. Also functions as an electroneutral mitochondrial proton/potassium exchanger. Required for the mitochondrial tubular network and cristae organization. Involved in apoptotic release of cytochrome c. Inhibits AFG3L2 proteolytic activity, stimulating respiration and stabilizing respiratory enzymes in actively respiring mitochondria. However, when mitochondria become hyperpolarized, GHITM loses its inhibitory activity toward AFG3L2 and the now active AFG3L2 turns first on GHITM and, if hyperpolarization persists, on other proteins of the mitochondria, leading to a broad remodeling of the mitochondrial proteome. This is Growth hormone-inducible transmembrane protein (Ghitm) from Mus musculus (Mouse).